Consider the following 433-residue polypeptide: tRNA(Ile)-lysidine synthase (433 aa).

27 to 32 is an ATP binding site; the sequence is SGGLDS.

Belongs to the tRNA(Ile)-lysidine synthase family.

It is found in the cytoplasm. The catalysed reaction is cytidine(34) in tRNA(Ile2) + L-lysine + ATP = lysidine(34) in tRNA(Ile2) + AMP + diphosphate + H(+). In terms of biological role, ligates lysine onto the cytidine present at position 34 of the AUA codon-specific tRNA(Ile) that contains the anticodon CAU, in an ATP-dependent manner. Cytidine is converted to lysidine, thus changing the amino acid specificity of the tRNA from methionine to isoleucine. The protein is tRNA(Ile)-lysidine synthase of Legionella pneumophila subsp. pneumophila (strain Philadelphia 1 / ATCC 33152 / DSM 7513).